The chain runs to 582 residues: MKSDIEICQTATLTRMKTIASNLGLHDDDITPQGPFKAKVNIDALKRLKSEPNGKLILVSAITPTPLGEGKTVTTIGLAQGLAKLGESVSACIRQPSMGPVFGVKGGAAGGGYSQVAPMEELNLHLTGDIHAITAAHNLASAAIDARIYHEQRLGYDVFSEKNELPALRIDPQHVVWKRVMDHNDRALRMVTIGKNEDGKTINGYEREDGFDITAASELMAILALATDLQDLRQRIGRIVVAYNLDGEPVTTEDLQVAGAMTVTMKFAINPTLMQTLEGVPTFVHSGPFANIAHGNSSIIADNIALKLTDYTVTEGGFGSDMGFEKACNIKAPLSEKSPDCAVLVATLRGIKANSGLFPLSPGQSLPKELFAPNKEALDAGLDNLLWHINNCAKYGLPVVVAINRFPEDTQEELDSLLNWVSNLDMNVDVAISEAFVKGGNGTLELAEKVIKACQQETQFTPLYTSEMSLFDKLNAVAIKGYGAERIELSEKAQQQLATFEKLGYQSLSVCMAKTPASISTDGNIKGAPTDFIVPIRELKLCAGAGFIYALCGNVMTMPGLPEKPAFMNLDIDGDGNIVGLS.

65 to 72 (TPLGEGKT) is an ATP binding site.

The protein belongs to the formate--tetrahydrofolate ligase family.

The enzyme catalyses (6S)-5,6,7,8-tetrahydrofolate + formate + ATP = (6R)-10-formyltetrahydrofolate + ADP + phosphate. It participates in one-carbon metabolism; tetrahydrofolate interconversion. The sequence is that of Formate--tetrahydrofolate ligase from Aliivibrio fischeri (strain ATCC 700601 / ES114) (Vibrio fischeri).